Reading from the N-terminus, the 291-residue chain is Ribosomal large subunit pseudouridine synthase B (291 aa).

The 61-residue stretch at 3 to 63 folds into the S4 RNA-binding domain; that stretch reads EKLQKVLARA…GHLISVKESA (61 aa). The active-site Nucleophile is Asp-110.

It belongs to the pseudouridine synthase RsuA family.

It carries out the reaction uridine(2605) in 23S rRNA = pseudouridine(2605) in 23S rRNA. In terms of biological role, responsible for synthesis of pseudouridine from uracil-2605 in 23S ribosomal RNA. This chain is Ribosomal large subunit pseudouridine synthase B (rluB), found in Salmonella typhimurium (strain LT2 / SGSC1412 / ATCC 700720).